A 449-amino-acid chain; its full sequence is MITIKKGLDLPIAGTPAQVIHNGNTVNEVAMLGEEYVGMRPSMKVREGDVVKKGQVLFEDKKNPGVVFTAPASGTVVTINRGEKRVLQSVVIKVEGDEQITFTRYEAAQLASLSAEQVKQNLIESGLWTAFRTRPFSKVPALDAIPSSIFVNAMDTNPLAADPEVVLKEYETDFKDGLTVLTRLFNGQKPVYLCKDADSNIPLSPAIEGITIKSFSGVHPAGLVGTHIHFVDPVGATKQVWHLNYQDVIAIGKLFTTGELFTDRIISLAGPQVKNPRLVRTRLGANLSQLTANELNAGENRVISGSVLSGATAAGPVDYLGRYALQVSVLAEGREKELFGWIMPGSDKFSITRTVLGHFGKKLFNFTTAVHGGERAMVPIGAYERVMPLDIIPTLLLRDLAAGDTDSAQNLGCLELDEEDLALCTYVCPGKNNYGPMLRAALEKIEKEG.

Belongs to the NqrA family. As to quaternary structure, composed of six subunits; NqrA, NqrB, NqrC, NqrD, NqrE and NqrF.

The enzyme catalyses a ubiquinone + n Na(+)(in) + NADH + H(+) = a ubiquinol + n Na(+)(out) + NAD(+). In terms of biological role, NQR complex catalyzes the reduction of ubiquinone-1 to ubiquinol by two successive reactions, coupled with the transport of Na(+) ions from the cytoplasm to the periplasm. NqrA to NqrE are probably involved in the second step, the conversion of ubisemiquinone to ubiquinol. This Actinobacillus pleuropneumoniae serotype 5b (strain L20) protein is Na(+)-translocating NADH-quinone reductase subunit A.